The following is a 404-amino-acid chain: MQDKSIKKIVLAYSGGLDTSAIIPWLKENYGGCEVVAFVADIGQERGDLEGVEQKALQSGASECHVVDLREEFISEYVYPVLQTGALYEGTYLLGTSMARPIIAKAQVELALKVGADALCHGATGKGNDQVRFETTYTALAPQLKVVAPWREWDLRSREALLDYLKERNIPTTASLEKIYSRDENAWHISTEGGVLESPWNAPNKDCWVWTVDPLEAPDQPEQVTIAVEKGRVVAVNGEALSPFGCLDKLNAIGARHGVGRIDIVENRLVGIKSRGCYETPGGTIMVNALRAVEQLVLDRDSFKWREQLGLEMSYVVYDGRWFAPLRKSIQASAEALAEEVNGEVVLQLYKGQVTAIQKKSANSLYSEEFATFGEDEVYDHRHAGGFIRLFSLSSRIRALNEKK.

ATP-binding positions include 12–20 (AYSGGLDTS) and A40. Residues Y92 and S97 each coordinate L-citrulline. ATP is bound at residue G122. L-aspartate contacts are provided by T124, N128, and D129. An L-citrulline-binding site is contributed by N128. Positions 132, 181, 190, 266, and 278 each coordinate L-citrulline.

The protein belongs to the argininosuccinate synthase family. Type 1 subfamily. As to quaternary structure, homotetramer.

The protein localises to the cytoplasm. The enzyme catalyses L-citrulline + L-aspartate + ATP = 2-(N(omega)-L-arginino)succinate + AMP + diphosphate + H(+). It participates in amino-acid biosynthesis; L-arginine biosynthesis; L-arginine from L-ornithine and carbamoyl phosphate: step 2/3. This Erwinia tasmaniensis (strain DSM 17950 / CFBP 7177 / CIP 109463 / NCPPB 4357 / Et1/99) protein is Argininosuccinate synthase.